We begin with the raw amino-acid sequence, 443 residues long: Chromosome partition protein MukF (443 aa).

A leucine-zipper region spans residues 209–237; sequence LDETSGNLRELQDTLNAAGDKLQAQLLRI.

It belongs to the MukF family. As to quaternary structure, interacts, and probably forms a ternary complex, with MukE and MukB via its C-terminal region. The complex formation is stimulated by calcium or magnesium. It is required for an interaction between MukE and MukB.

The protein localises to the cytoplasm. The protein resides in the nucleoid. In terms of biological role, involved in chromosome condensation, segregation and cell cycle progression. May participate in facilitating chromosome segregation by condensation DNA from both sides of a centrally located replisome during cell division. Not required for mini-F plasmid partitioning. Probably acts via its interaction with MukB and MukE. Overexpression results in anucleate cells. It has a calcium binding activity. This chain is Chromosome partition protein MukF, found in Actinobacillus pleuropneumoniae serotype 3 (strain JL03).